Here is a 209-residue protein sequence, read N- to C-terminus: Tektin bundle-interacting protein 1 (209 aa).

Microtubule inner protein component of sperm flagellar doublet microtubules.

It is found in the cytoplasm. The protein localises to the cytoskeleton. It localises to the cilium axoneme. Its subcellular location is the flagellum axoneme. In terms of biological role, microtubule inner protein (MIP) part of the dynein-decorated doublet microtubules (DMTs) in cilia axoneme, which is required for motile cilia beating. Located at the center of the tektin bundle where may function to recruit tektins or stabilize the bundle. This chain is Tektin bundle-interacting protein 1 (TEKTIP1), found in Macaca fascicularis (Crab-eating macaque).